Reading from the N-terminus, the 121-residue chain is uncharacterized protein (121 aa).

This is an uncharacterized protein from Ictaluridae (bullhead catfishes).